Reading from the N-terminus, the 62-residue chain is DNA-directed RNA polymerase subunit omega (62 aa).

The protein belongs to the RNA polymerase subunit omega family. As to quaternary structure, the RNAP catalytic core consists of 2 alpha, 1 beta, 1 beta' and 1 omega subunit. When a sigma factor is associated with the core the holoenzyme is formed, which can initiate transcription.

It carries out the reaction RNA(n) + a ribonucleoside 5'-triphosphate = RNA(n+1) + diphosphate. Functionally, promotes RNA polymerase assembly. Latches the N- and C-terminal regions of the beta' subunit thereby facilitating its interaction with the beta and alpha subunits. The chain is DNA-directed RNA polymerase subunit omega from Wigglesworthia glossinidia brevipalpis.